Reading from the N-terminus, the 104-residue chain is Nucleoid-associated protein GAU_1113 (104 aa).

The protein belongs to the YbaB/EbfC family. As to quaternary structure, homodimer.

The protein resides in the cytoplasm. It is found in the nucleoid. In terms of biological role, binds to DNA and alters its conformation. May be involved in regulation of gene expression, nucleoid organization and DNA protection. The chain is Nucleoid-associated protein GAU_1113 from Gemmatimonas aurantiaca (strain DSM 14586 / JCM 11422 / NBRC 100505 / T-27).